The following is a 305-amino-acid chain: Glycine cleavage system transcriptional activator (305 aa).

Residues 6-63 enclose the HTH lysR-type domain; sequence PPLNALRVFDAAARHLSFTRAAEELFVTQAAVSHQIKSLEDFLGLKLFRRRNRSLLLT. The H-T-H motif DNA-binding region spans 23-42; sequence FTRAAEELFVTQAAVSHQIK.

The protein belongs to the LysR transcriptional regulatory family.

It localises to the cytoplasm. Its function is as follows. Regulatory protein for the glycine cleavage system operon (gcv). Mediates activation of gcv by glycine and repression by purines. GcvA is negatively autoregulated. Binds to three sites upstream of the gcv promoter. This is Glycine cleavage system transcriptional activator (gcvA) from Escherichia coli O157:H7.